Here is a 675-residue protein sequence, read N- to C-terminus: Methionine--tRNA ligase (675 aa).

A 'HIGH' region motif is present at residues 15-25 (PYANGPIHLGH). The Zn(2+) site is built by Cys-146, Cys-149, Cys-159, and Cys-162. The 'KMSKS' region motif lies at 332-336 (KMSKS). Position 335 (Lys-335) interacts with ATP. Residues 573 to 675 (DFAKVDMRVA…SGAQPGMQVK (103 aa)) enclose the tRNA-binding domain.

The protein belongs to the class-I aminoacyl-tRNA synthetase family. MetG type 1 subfamily. Homodimer. Zn(2+) is required as a cofactor.

The protein localises to the cytoplasm. It carries out the reaction tRNA(Met) + L-methionine + ATP = L-methionyl-tRNA(Met) + AMP + diphosphate. Functionally, is required not only for elongation of protein synthesis but also for the initiation of all mRNA translation through initiator tRNA(fMet) aminoacylation. The chain is Methionine--tRNA ligase from Photorhabdus laumondii subsp. laumondii (strain DSM 15139 / CIP 105565 / TT01) (Photorhabdus luminescens subsp. laumondii).